The following is a 428-amino-acid chain: Adenylosuccinate synthetase (428 aa).

Residues 12 to 18 (GDEGKGK) and 40 to 42 (GHT) each bind GTP. The Proton acceptor role is filled by Asp13. The Mg(2+) site is built by Asp13 and Gly40. IMP is bound by residues 13–16 (DEGK), 38–41 (NAGH), Thr130, Arg144, Gln225, Thr240, and Arg304. The Proton donor role is filled by His41. 300–306 (ATTGRPR) lines the substrate pocket. Residues Arg306, 332-334 (KLD), and 415-417 (SVG) each bind GTP.

The protein belongs to the adenylosuccinate synthetase family. Homodimer. Mg(2+) is required as a cofactor.

It is found in the cytoplasm. The catalysed reaction is IMP + L-aspartate + GTP = N(6)-(1,2-dicarboxyethyl)-AMP + GDP + phosphate + 2 H(+). The protein operates within purine metabolism; AMP biosynthesis via de novo pathway; AMP from IMP: step 1/2. Plays an important role in the de novo pathway of purine nucleotide biosynthesis. Catalyzes the first committed step in the biosynthesis of AMP from IMP. The chain is Adenylosuccinate synthetase from Lawsonia intracellularis (strain PHE/MN1-00).